The chain runs to 264 residues: MDNRPIGFLDSGVGGLTVVRELMRQLPHEEVIYIGDSARAPYGPRPAEQIRDYTWQLVNFLLTKDVKMIVIACNTATAVVWEEIKEKLDIPVLGVILPGASAAIKSTHSGKIGVIGTPMTVTSDIYRKKIEALSPEMEVSSLACPKFVPLVESNELTSSVTKKVVYETLLPLAGKVDTLVLGCTHYPLLRSIIQNVMGPDVKLIDSGAECVRDISVLLNYFEINRSREEQTLRHRFYTTASAKSFAEIAEHWLGQKVSVEHIDL.

Substrate is bound by residues 10–11 (DS) and 42–43 (YG). The Proton donor/acceptor role is filled by Cys73. 74–75 (NT) provides a ligand contact to substrate. Cys183 serves as the catalytic Proton donor/acceptor. Position 184–185 (184–185 (TH)) interacts with substrate.

Belongs to the aspartate/glutamate racemases family.

The enzyme catalyses L-glutamate = D-glutamate. It participates in cell wall biogenesis; peptidoglycan biosynthesis. Its function is as follows. Provides the (R)-glutamate required for cell wall biosynthesis. The protein is Glutamate racemase of Streptococcus gordonii (strain Challis / ATCC 35105 / BCRC 15272 / CH1 / DL1 / V288).